We begin with the raw amino-acid sequence, 308 residues long: Large ribosomal subunit protein mL38 (308 aa).

The N-terminal 17 residues, 1–17 (MKRVWPRIPTISNVCRA), are a transit peptide targeting the mitochondrion.

It belongs to the phosphatidylethanolamine-binding protein family. Mitochondrion-specific ribosomal protein mL38 subfamily. In terms of assembly, component of the mitochondrial large ribosomal subunit (mt-LSU). Mature yeast 74S mitochondrial ribosomes consist of a small (37S) and a large (54S) subunit. The 37S small subunit contains a 15S ribosomal RNA (15S mt-rRNA) and at least 32 different proteins. The 54S large subunit contains a 21S rRNA (21S mt-rRNA) and at least 45 different proteins.

The protein localises to the mitochondrion. Its function is as follows. Component of the mitochondrial ribosome (mitoribosome), a dedicated translation machinery responsible for the synthesis of mitochondrial genome-encoded proteins, including at least some of the essential transmembrane subunits of the mitochondrial respiratory chain. The mitoribosomes are attached to the mitochondrial inner membrane and translation products are cotranslationally integrated into the membrane. This chain is Large ribosomal subunit protein mL38 (mrpl35), found in Schizosaccharomyces pombe (strain 972 / ATCC 24843) (Fission yeast).